The chain runs to 393 residues: Formate-dependent phosphoribosylglycinamide formyltransferase (393 aa).

N(1)-(5-phospho-beta-D-ribosyl)glycinamide contacts are provided by residues 22–23 and E82; that span reads EL. Residues R114, K155, 160-165, 195-198, and E203 each bind ATP; these read SSGKGQ and EGFI. The ATP-grasp domain maps to 119 to 308; the sequence is RLAAEELDLP…QFALHARAIL (190 aa). Mg(2+) is bound by residues E267 and E279. Residues D286, K356, and 363 to 364 contribute to the N(1)-(5-phospho-beta-D-ribosyl)glycinamide site; that span reads RR.

It belongs to the PurK/PurT family. Homodimer.

The enzyme catalyses N(1)-(5-phospho-beta-D-ribosyl)glycinamide + formate + ATP = N(2)-formyl-N(1)-(5-phospho-beta-D-ribosyl)glycinamide + ADP + phosphate + H(+). It participates in purine metabolism; IMP biosynthesis via de novo pathway; N(2)-formyl-N(1)-(5-phospho-D-ribosyl)glycinamide from N(1)-(5-phospho-D-ribosyl)glycinamide (formate route): step 1/1. Functionally, involved in the de novo purine biosynthesis. Catalyzes the transfer of formate to 5-phospho-ribosyl-glycinamide (GAR), producing 5-phospho-ribosyl-N-formylglycinamide (FGAR). Formate is provided by PurU via hydrolysis of 10-formyl-tetrahydrofolate. The chain is Formate-dependent phosphoribosylglycinamide formyltransferase from Pseudomonas putida (strain GB-1).